Consider the following 381-residue polypeptide: Beta-lactamase (381 aa).

The N-terminal stretch at 1–20 (MMRKSLCCALLLGISCSALA) is a signal peptide. Residue Ser84 is the Acyl-ester intermediate of the active site. Residue Tyr170 is the Proton acceptor of the active site. Substrate is bound at residue 335–337 (KTG).

It belongs to the class-C beta-lactamase family.

Its subcellular location is the periplasm. The catalysed reaction is a beta-lactam + H2O = a substituted beta-amino acid. In terms of biological role, this protein is a serine beta-lactamase with a substrate specificity for cephalosporins. The polypeptide is Beta-lactamase (ampC) (Enterobacter cloacae).